Here is a 605-residue protein sequence, read N- to C-terminus: Aspartate--tRNA(Asp/Asn) ligase (605 aa).

Glu-183 lines the L-aspartate pocket. The aspartate stretch occupies residues 207 to 210 (QLFK). Residue Arg-229 participates in L-aspartate binding. Residues 229-231 (RDE) and Gln-238 contribute to the ATP site. His-457 is an L-aspartate binding site. Glu-497 contributes to the ATP binding site. L-aspartate is bound at residue Arg-504. Position 549 to 552 (549 to 552 (GLDR)) interacts with ATP.

This sequence belongs to the class-II aminoacyl-tRNA synthetase family. Type 1 subfamily. In terms of assembly, homodimer.

It localises to the cytoplasm. It catalyses the reaction tRNA(Asx) + L-aspartate + ATP = L-aspartyl-tRNA(Asx) + AMP + diphosphate. Functionally, aspartyl-tRNA synthetase with relaxed tRNA specificity since it is able to aspartylate not only its cognate tRNA(Asp) but also tRNA(Asn). Reaction proceeds in two steps: L-aspartate is first activated by ATP to form Asp-AMP and then transferred to the acceptor end of tRNA(Asp/Asn). The chain is Aspartate--tRNA(Asp/Asn) ligase from Persephonella marina (strain DSM 14350 / EX-H1).